The primary structure comprises 311 residues: Mediator of RNA polymerase II transcription subunit 27 (311 aa).

It belongs to the Mediator complex subunit 27 family. As to quaternary structure, component of the Mediator complex.

It is found in the nucleus. Component of the Mediator complex, a coactivator involved in the regulated transcription of nearly all RNA polymerase II-dependent genes. Mediator functions as a bridge to convey information from gene-specific regulatory proteins to the basal RNA polymerase II transcription machinery. Mediator is recruited to promoters by direct interactions with regulatory proteins and serves as a scaffold for the assembly of a functional preinitiation complex with RNA polymerase II and the general transcription factors. Required for the development of dopaminergic amacrine cells in the retina. May also negatively regulate the development of rod photoreceptor cells. This Danio rerio (Zebrafish) protein is Mediator of RNA polymerase II transcription subunit 27 (med27).